We begin with the raw amino-acid sequence, 75 residues long: Cytochrome c oxidase subunit 6C (75 aa).

The Mitochondrial matrix segment spans residues 1 to 13 (MSSGALTKPQMRG). Residues 14–54 (LLAKRLRFHIVGAFAVSLGVAAFYKFAVAEPRKKAYADFYR) traverse the membrane as a helical segment. The Mitochondrial intermembrane segment spans residues 55 to 75 (NYDSMKDFEEMRKAGIFQSAK).

The protein belongs to the cytochrome c oxidase subunit 6c family. In terms of assembly, component of the cytochrome c oxidase (complex IV, CIV), a multisubunit enzyme composed of 14 subunits. The complex is composed of a catalytic core of 3 subunits MT-CO1, MT-CO2 and MT-CO3, encoded in the mitochondrial DNA, and 11 supernumerary subunits COX4I, COX5A, COX5B, COX6A, COX6B, COX6C, COX7A, COX7B, COX7C, COX8 and NDUFA4, which are encoded in the nuclear genome. The complex exists as a monomer or a dimer and forms supercomplexes (SCs) in the inner mitochondrial membrane with NADH-ubiquinone oxidoreductase (complex I, CI) and ubiquinol-cytochrome c oxidoreductase (cytochrome b-c1 complex, complex III, CIII), resulting in different assemblies (supercomplex SCI(1)III(2)IV(1) and megacomplex MCI(2)III(2)IV(2)).

It is found in the mitochondrion inner membrane. The protein operates within energy metabolism; oxidative phosphorylation. In terms of biological role, component of the cytochrome c oxidase, the last enzyme in the mitochondrial electron transport chain which drives oxidative phosphorylation. The respiratory chain contains 3 multisubunit complexes succinate dehydrogenase (complex II, CII), ubiquinol-cytochrome c oxidoreductase (cytochrome b-c1 complex, complex III, CIII) and cytochrome c oxidase (complex IV, CIV), that cooperate to transfer electrons derived from NADH and succinate to molecular oxygen, creating an electrochemical gradient over the inner membrane that drives transmembrane transport and the ATP synthase. Cytochrome c oxidase is the component of the respiratory chain that catalyzes the reduction of oxygen to water. Electrons originating from reduced cytochrome c in the intermembrane space (IMS) are transferred via the dinuclear copper A center (CU(A)) of subunit 2 and heme A of subunit 1 to the active site in subunit 1, a binuclear center (BNC) formed by heme A3 and copper B (CU(B)). The BNC reduces molecular oxygen to 2 water molecules using 4 electrons from cytochrome c in the IMS and 4 protons from the mitochondrial matrix. The sequence is that of Cytochrome c oxidase subunit 6C (COX6C) from Carlito syrichta (Philippine tarsier).